Here is a 108-residue protein sequence, read N- to C-terminus: Putative pterin-4-alpha-carbinolamine dehydratase (108 aa).

This sequence belongs to the pterin-4-alpha-carbinolamine dehydratase family.

The catalysed reaction is (4aS,6R)-4a-hydroxy-L-erythro-5,6,7,8-tetrahydrobiopterin = (6R)-L-erythro-6,7-dihydrobiopterin + H2O. The protein is Putative pterin-4-alpha-carbinolamine dehydratase of Chromobacterium violaceum (strain ATCC 12472 / DSM 30191 / JCM 1249 / CCUG 213 / NBRC 12614 / NCIMB 9131 / NCTC 9757 / MK).